The following is a 198-amino-acid chain: Putative protein-methionine-sulfoxide reductase subunit YedZ1 (198 aa).

4 consecutive transmembrane segments (helical) span residues 12 to 32 (WLRVTHWLYVVAVVILVMSGW), 63 to 83 (FAAMWLLAVNGLIYLFFNIFS), 124 to 144 (AAYLFAIADIIVIVLSGLVLW), and 167 to 187 (FIGMSALVAFVGVHVAMVALV).

The protein belongs to the HupC/HyaC/HydC family.

It localises to the cell inner membrane. Its function is as follows. Part of the YedY1-YedZ1 system that may repair oxidized proteins containing methionine sulfoxide residues (Met-O). This is Putative protein-methionine-sulfoxide reductase subunit YedZ1 from Azospira oryzae (strain ATCC BAA-33 / DSM 13638 / PS) (Dechlorosoma suillum).